A 255-amino-acid chain; its full sequence is Ribonuclease HII (255 aa).

Positions 73 to 255 (LYIGGIDEAG…HRKSFLKNIL (183 aa)) constitute an RNase H type-2 domain. Residues Asp-79, Glu-80, and Asp-171 each coordinate a divalent metal cation.

It belongs to the RNase HII family. Mn(2+) is required as a cofactor. Requires Mg(2+) as cofactor.

It is found in the cytoplasm. The catalysed reaction is Endonucleolytic cleavage to 5'-phosphomonoester.. Endonuclease that specifically degrades the RNA of RNA-DNA hybrids. The protein is Ribonuclease HII of Clostridioides difficile (strain 630) (Peptoclostridium difficile).